The primary structure comprises 1088 residues: Serine/threonine-protein kinase 11-interacting protein (1088 aa).

LRR repeat units lie at residues 109 to 130, 132 to 152, 164 to 185, 187 to 209, 210 to 231, 233 to 254, 255 to 276, and 280 to 301; these read SLRH…RGIY, QLET…LSAC, ALLS…LRLL, ALRF…MDLC, ELHH…GPSG, ALGV…EQLR, NLRH…SPLW, and ELRK…RAAT. Disordered stretches follow at residues 335 to 407 and 437 to 533; these read GLSP…SPAG and LEPS…QKEV. The span at 346 to 367 shows a compositional bias: low complexity; that stretch reads PVGSTPETSGGPDLSDSLSSGG. Residues 375-385 are compositionally biased toward basic residues; the sequence is HKVKSRVRVRR. S387, S389, and S392 each carry phosphoserine. Low complexity predominate over residues 447–460; it reads TPTTSAPSAPPASS. The residue at position 470 (S470) is a Phosphoserine. The span at 508-529 shows a compositional bias: acidic residues; it reads EEGEMVEQGEEEAGEEEEEEQD. S599 carries the phosphoserine modification. Disordered regions lie at residues 724–780 and 978–1009; these read TPNR…SPPP and DAAG…PAVR. Residues 733–742 show a composition bias toward polar residues; the sequence is EQSLAPSPSA. Over residues 750-759 the composition is skewed to basic and acidic residues; that stretch reads GHGDHLDRAK. Residues S761, S773, and S777 each carry the phosphoserine modification. A compositionally biased stretch (low complexity) spans 978 to 994; it reads DAAGSPAEPSPPAASGE.

The protein belongs to the STK11IP family. Found in a ternary complex composed of STK11/LKB1, STK11IP and SMAD4. Interacts with STK11/LKB1 and SMAD4.

It is found in the cytoplasm. May regulate STK11/LKB1 function by controlling its subcellular localization. This chain is Serine/threonine-protein kinase 11-interacting protein (STK11IP), found in Homo sapiens (Human).